The chain runs to 184 residues: Leucine-rich repeat-containing protein 20 (184 aa).

LRR repeat units lie at residues 23–44, 51–72, 75–96, 98–120, 121–141, and 145–167; these read GSDTLDLADCKLVSFPICIYKV, QIHLITLANNELKSLTSKFMTT, QLRELRLEGNYLFRLPNEVSSL, HLRAIDLSRNQFQDFPEQLTTLP, ALETINLEENEIVDVPVEKLA, and ALRVINLRLNPLSADVRVIAPPL. S175 is subject to Phosphoserine.

The sequence is that of Leucine-rich repeat-containing protein 20 (Lrrc20) from Mus musculus (Mouse).